Reading from the N-terminus, the 503-residue chain is Probable dolichyl pyrophosphate Man9GlcNAc2 alpha-1,3-glucosyltransferase (503 aa).

Topologically, residues 1 to 46 (MKERIKDKAWRPQFIKLNNPDTSKKIVSQKSKKPEIVDLSSPGNND) are cytoplasmic. A helical transmembrane segment spans residues 47–67 (LVTISILCVLLCFQLAISLNP). The Lumenal segment spans residues 68-151 (HSGESQPPMY…SRGYESIAHK (84 aa)). Residues 152–172 (LFMRLSAIIPFYIFYLPPLIF) form a helical membrane-spanning segment. Residues 173-181 (YFTRSKKMS) lie on the Cytoplasmic side of the membrane. The helical transmembrane segment at 182–202 (PILYALALLYPSLLVIDNGHF) threads the bilayer. Residues 203–211 (QYNSISLGL) lie on the Lumenal side of the membrane. A helical transmembrane segment spans residues 212-232 (FLATYMFLTKNFTIIGSILFV). Over 233-239 (AALNYKQ) the chain is Cytoplasmic. A helical transmembrane segment spans residues 240–257 (MELYHALPVFVFILARSI). At 258 to 268 (NKTQLFNSFRR) the chain is on the lumenal side. Residues 269-289 (ILTIGLFVVGTFLIIWLPFLL) traverse the membrane as a helical segment. Residues 290 to 332 (TGTAKDVIIRVFPFNRGLYEDKVASFWCAFSFILKRLPLQSVQ) lie on the Cytoplasmic side of the membrane. A helical membrane pass occupies residues 333-353 (IYISTALVLAGSAPSLLVLFL). At 354-359 (RPTEKQ) the chain is on the lumenal side. The chain crosses the membrane as a helical span at residues 360-379 (FRISLTATGLSFFLFSFHVH). The Cytoplasmic portion of the chain corresponds to 380–382 (EKT). A helical transmembrane segment spans residues 383 to 403 (ILLAAVPALLLISEYTSLVIW). Residues 404–420 (FLNITNISIFSLCVKDN) are Lumenal-facing. The helical transmembrane segment at 421-441 (FALSLSFFFAYFVVSYAYTAP) threads the bilayer. The Cytoplasmic portion of the chain corresponds to 442–443 (RK). Residues 444–464 (ISHILTILIGFAICILELYGP) traverse the membrane as a helical segment. Residues 465–474 (SNQRFPHIYQ) are Lumenal-facing. A helical transmembrane segment spans residues 475–495 (LANAFFSCVHFIYFLLYLSFA). Residues 496–503 (SFEKTKKE) are Cytoplasmic-facing.

Belongs to the ALG6/ALG8 glucosyltransferase family.

It is found in the endoplasmic reticulum membrane. It carries out the reaction an alpha-D-Man-(1-&gt;2)-alpha-D-Man-(1-&gt;2)-alpha-D-Man-(1-&gt;3)-[alpha-D-Man-(1-&gt;2)-alpha-D-Man-(1-&gt;3)-[alpha-D-Man-(1-&gt;2)-alpha-D-Man-(1-&gt;6)]-alpha-D-Man-(1-&gt;6)]-beta-D-Man-(1-&gt;4)-beta-D-GlcNAc-(1-&gt;4)-alpha-D-GlcNAc-diphospho-di-trans,poly-cis-dolichol + a di-trans,poly-cis-dolichyl beta-D-glucosyl phosphate = an alpha-D-Glc-(1-&gt;3)-alpha-D-Man-(1-&gt;2)-alpha-D-Man-(1-&gt;2)-alpha-D-Man-(1-&gt;3)-[alpha-D-Man-(1-&gt;2)-alpha-D-Man-(1-&gt;3)-[alpha-D-Man-(1-&gt;2)-alpha-D-Man-(1-&gt;6)]-alpha-D-Man-(1-&gt;6)]-beta-D-Man-(1-&gt;4)-beta-D-GlcNAc-(1-&gt;4)-alpha-D-GlcNAc-diphospho-di-trans,poly-cis-dolichol + a di-trans,poly-cis-dolichyl phosphate + H(+). It participates in protein modification; protein glycosylation. In terms of biological role, adds the first glucose residue to the lipid-linked oligosaccharide precursor for N-linked glycosylation. Transfers glucose from dolichyl phosphate glucose (Dol-P-Glc) onto the lipid-linked oligosaccharide Man(9)GlcNAc(2)-PP-Dol. In Caenorhabditis elegans, this protein is Probable dolichyl pyrophosphate Man9GlcNAc2 alpha-1,3-glucosyltransferase.